A 141-amino-acid polypeptide reads, in one-letter code: Hemoglobin subunit alpha-A (141 aa).

Residues 1-141 (MLSASDKANV…VGLVLTAKYR (141 aa)) form the Globin domain. Position 58 (histidine 58) interacts with O2. Residue histidine 87 coordinates heme b.

Belongs to the globin family. There are three forms of hemoglobin in Sphenodon: A, A' and D. Hb A is a tetramer of two alpha-A and two beta-1, Hb A' is a tetramer of two alpha-a and two beta-2, Hb D is a tetramer of two alpha-D and two beta-2. As to expression, red blood cells.

Involved in oxygen transport from the lung to the various peripheral tissues. This Sphenodon punctatus (Tuatara) protein is Hemoglobin subunit alpha-A (HBAA).